The chain runs to 123 residues: Small ribosomal subunit protein uS12c (123 aa).

The protein belongs to the universal ribosomal protein uS12 family. As to quaternary structure, part of the 30S ribosomal subunit.

The protein resides in the plastid. It localises to the chloroplast. With S4 and S5 plays an important role in translational accuracy. Located at the interface of the 30S and 50S subunits. In Chara vulgaris (Common stonewort), this protein is Small ribosomal subunit protein uS12c (rps12).